We begin with the raw amino-acid sequence, 692 residues long: Elongation factor G (692 aa).

In terms of domain architecture, tr-type G spans 8-282 (AKTRNIGIMA…AVIAYLPSPL (275 aa)). GTP is bound by residues 17–24 (AHVDAGKT), 81–85 (DTPGH), and 135–138 (NKMD).

This sequence belongs to the TRAFAC class translation factor GTPase superfamily. Classic translation factor GTPase family. EF-G/EF-2 subfamily.

Its subcellular location is the cytoplasm. Catalyzes the GTP-dependent ribosomal translocation step during translation elongation. During this step, the ribosome changes from the pre-translocational (PRE) to the post-translocational (POST) state as the newly formed A-site-bound peptidyl-tRNA and P-site-bound deacylated tRNA move to the P and E sites, respectively. Catalyzes the coordinated movement of the two tRNA molecules, the mRNA and conformational changes in the ribosome. The chain is Elongation factor G from Streptococcus equi subsp. equi (strain 4047).